Here is a 79-residue protein sequence, read N- to C-terminus: Large ribosomal subunit protein uL24 (79 aa).

The protein belongs to the universal ribosomal protein uL24 family. As to quaternary structure, part of the 50S ribosomal subunit.

One of two assembly initiator proteins, it binds directly to the 5'-end of the 23S rRNA, where it nucleates assembly of the 50S subunit. Its function is as follows. One of the proteins that surrounds the polypeptide exit tunnel on the outside of the subunit. In Lactobacillus johnsonii (strain CNCM I-12250 / La1 / NCC 533), this protein is Large ribosomal subunit protein uL24.